The sequence spans 66 residues: Cold shock protein CspD (66 aa).

A CSD domain is found at 4-63 (GKVKWFNNEKGFGFIEVEGGDDVFVHFTAIEGDGYKSLEEGQEVSFEIVEGNRGPQASNV).

The protein resides in the cytoplasm. The polypeptide is Cold shock protein CspD (cspD) (Bacillus subtilis (strain 168)).